A 578-amino-acid polypeptide reads, in one-letter code: Phenylalanine--tRNA ligase beta subunit (578 aa).

In terms of domain architecture, B5 spans 292–370 (FDTDEKSVSH…RAYGFDNLEP (79 aa)). Mg(2+)-binding residues include Asp348, Asp354, Asp357, and Asp358.

This sequence belongs to the phenylalanyl-tRNA synthetase beta subunit family. Type 2 subfamily. Tetramer of two alpha and two beta subunits. Mg(2+) serves as cofactor.

The protein localises to the cytoplasm. It carries out the reaction tRNA(Phe) + L-phenylalanine + ATP = L-phenylalanyl-tRNA(Phe) + AMP + diphosphate + H(+). In Halorubrum lacusprofundi (strain ATCC 49239 / DSM 5036 / JCM 8891 / ACAM 34), this protein is Phenylalanine--tRNA ligase beta subunit.